The primary structure comprises 958 residues: Glycine dehydrogenase (decarboxylating) (958 aa).

Residue K708 is modified to N6-(pyridoxal phosphate)lysine.

It belongs to the GcvP family. The glycine cleavage system is composed of four proteins: P, T, L and H. Pyridoxal 5'-phosphate is required as a cofactor.

It catalyses the reaction N(6)-[(R)-lipoyl]-L-lysyl-[glycine-cleavage complex H protein] + glycine + H(+) = N(6)-[(R)-S(8)-aminomethyldihydrolipoyl]-L-lysyl-[glycine-cleavage complex H protein] + CO2. In terms of biological role, the glycine cleavage system catalyzes the degradation of glycine. The P protein binds the alpha-amino group of glycine through its pyridoxal phosphate cofactor; CO(2) is released and the remaining methylamine moiety is then transferred to the lipoamide cofactor of the H protein. This Photorhabdus laumondii subsp. laumondii (strain DSM 15139 / CIP 105565 / TT01) (Photorhabdus luminescens subsp. laumondii) protein is Glycine dehydrogenase (decarboxylating).